The chain runs to 732 residues: Prolyl tripeptidyl peptidase (732 aa).

Residues 1–24 form the signal peptide; sequence MKKTIFQQLFLSVCALTVALPCSA. Residues Ser603, Asp678, and His710 each act as charge relay system in the active site.

Belongs to the peptidase S9B family. Post-translationally, the N-terminus is blocked.

It catalyses the reaction Hydrolysis of Xaa-Xaa-Pro-|-Yaa- releasing the N-terminal tripeptide of a peptide with Pro as the third residue (position P1) and where Yaa is not proline.. Its activity is regulated as follows. Strongly inhibited by diisopropyl fluorophosphate and Pefabloc. Weakly inhibited by 3,4-dichloroisocumarin. Not inhibited by phenylmethylsulfonyl fluoride, leupeptin, antipain or prolinal. Activated by iodoacetamide. Its function is as follows. Serine proteinase. Releases tripeptides from the free amino terminus of proteins. Has a requirement for Pro in the P1 position, but is inactivated by Pro in the P1' position. The chain is Prolyl tripeptidyl peptidase from Porphyromonas gingivalis (strain ATCC BAA-308 / W83).